The following is a 273-amino-acid chain: Dermonecrotic toxin LhSicTox-alphaIA2av (273 aa).

Residue H5 is part of the active site. Residues E25 and D27 each coordinate Mg(2+). Residue H41 is the Nucleophile of the active site. Cystine bridges form between C45–C51 and C47–C190. Position 85 (D85) interacts with Mg(2+).

The protein belongs to the arthropod phospholipase D family. Class II subfamily. The cofactor is Mg(2+). In terms of tissue distribution, expressed by the venom gland.

It is found in the secreted. The enzyme catalyses an N-(acyl)-sphingosylphosphocholine = an N-(acyl)-sphingosyl-1,3-cyclic phosphate + choline. The catalysed reaction is an N-(acyl)-sphingosylphosphoethanolamine = an N-(acyl)-sphingosyl-1,3-cyclic phosphate + ethanolamine. It carries out the reaction a 1-acyl-sn-glycero-3-phosphocholine = a 1-acyl-sn-glycero-2,3-cyclic phosphate + choline. It catalyses the reaction a 1-acyl-sn-glycero-3-phosphoethanolamine = a 1-acyl-sn-glycero-2,3-cyclic phosphate + ethanolamine. In terms of biological role, dermonecrotic toxins cleave the phosphodiester linkage between the phosphate and headgroup of certain phospholipids (sphingolipid and lysolipid substrates), forming an alcohol (often choline) and a cyclic phosphate. This toxin acts on sphingomyelin (SM). It may also act on ceramide phosphoethanolamine (CPE), lysophosphatidylcholine (LPC) and lysophosphatidylethanolamine (LPE), but not on lysophosphatidylserine (LPS), and lysophosphatidylglycerol (LPG). It acts by transphosphatidylation, releasing exclusively cyclic phosphate products as second products. Induces dermonecrosis, hemolysis, increased vascular permeability, edema, inflammatory response, and platelet aggregation. This is Dermonecrotic toxin LhSicTox-alphaIA2av from Loxosceles hirsuta (Recluse spider).